Reading from the N-terminus, the 341-residue chain is S-adenosylmethionine:tRNA ribosyltransferase-isomerase (341 aa).

Belongs to the QueA family. Monomer.

Its subcellular location is the cytoplasm. It carries out the reaction 7-aminomethyl-7-carbaguanosine(34) in tRNA + S-adenosyl-L-methionine = epoxyqueuosine(34) in tRNA + adenine + L-methionine + 2 H(+). Its pathway is tRNA modification; tRNA-queuosine biosynthesis. Functionally, transfers and isomerizes the ribose moiety from AdoMet to the 7-aminomethyl group of 7-deazaguanine (preQ1-tRNA) to give epoxyqueuosine (oQ-tRNA). This is S-adenosylmethionine:tRNA ribosyltransferase-isomerase from Symbiobacterium thermophilum (strain DSM 24528 / JCM 14929 / IAM 14863 / T).